The primary structure comprises 160 residues: Baculoviral IAP repeat-containing protein 5.1-B (160 aa).

The stretch at 13–83 (QRLQDFRNMY…EGWEPDDDPW (71 aa)) is one BIR repeat. T43 is modified (phosphothreonine; by CDK1). C66, C69, H86, and C93 together coordinate Zn(2+).

It belongs to the IAP family. Component of the CPC at least composed of survivin/birc5, incenp, cdca8/borealin and/or cdca9/dasra-A, and aurkb/aurora-B. Interacts directly with incenp (via N-terminus), and may weakly interact with aurkb (via N-terminus) to stabilize the complex. Interacts with GTP-bound ran in both the S and M phases of the cell cycle. Also found in a complex with ubiquitin-mediated signaling proteins including at least usp9x/xFAM, nploc4/npl4 and ufd1. Post-translationally, ubiquitination is required for centrosome-targeting.

The protein resides in the cytoplasm. It localises to the nucleus. It is found in the chromosome. Its subcellular location is the centromere. The protein localises to the cytoskeleton. The protein resides in the spindle. In terms of biological role, component of the chromosomal passenger complex (CPC), a complex that acts as a key regulator of mitosis. The CPC complex has essential functions at the centromere in ensuring correct chromosome alignment and segregation and is required for chromatin-induced microtubule stabilization and spindle assembly. Stimulates the mitotic kinase activity of aurkb/aurora-B in the CPC. Does not appear to exhibit anti-apoptotic activity. CPC. Does not appear to exhibit anti-apoptotic activity. This is Baculoviral IAP repeat-containing protein 5.1-B (birc5.1-b) from Xenopus laevis (African clawed frog).